The following is a 292-amino-acid chain: UPF0696 protein C11orf68 homolog (292 aa).

The segment covering 1 to 10 (MAAAAAAVAG) has biased composition (low complexity). Residues 1–60 (MAAAAAAVAGAGRGGGGGADPGQERSRARSWVGAERSEGRRMEPNEELEEEDSPGGREDG) form a disordered region. Residues 11-20 (AGRGGGGGAD) are compositionally biased toward gly residues. Residues 35-44 (ERSEGRRMEP) are compositionally biased toward basic and acidic residues.

Belongs to the UPF0696 family.

The chain is UPF0696 protein C11orf68 homolog (Bles03) from Rattus norvegicus (Rat).